We begin with the raw amino-acid sequence, 201 residues long: Natural cytotoxicity triggering receptor 3 (201 aa).

Residues 1-18 form the signal peptide; that stretch reads MAWMLLLILIMVYPGSCA. The Ig-like domain occupies 19 to 126; the sequence is LWVSQPPEIR…VGTGNGTRLV (108 aa). The Extracellular segment spans residues 19-133; it reads LWVSQPPEIR…RLVVEKEYPQ (115 aa). A disulfide bridge links Cys-39 with Cys-108. N-linked (GlcNAc...) asparagine glycans are attached at residues Asn-42 and Asn-121. Residues 134-154 form a helical membrane-spanning segment; the sequence is LGAGTVLLLRAGFYAVSFLSV. Over 155 to 201 the chain is Cytoplasmic; that stretch reads AMGSTLYYQGKCLTWKGPRRQLPAVVPGPLPPPCGSSAHLLPPVPGG.

This sequence belongs to the natural cytotoxicity receptor (NCR) family. Homodimer in the unliganted form. Interacts with CD3Z. Interacts with and is activated by binding to NCR3LG1. Interacts with and is activated by binding to BAG6. Interacts with and is inhibited by binding to LGALS3.

It localises to the cell membrane. In terms of biological role, cell membrane receptor of natural killer/NK cells that is activated by binding of extracellular ligands including BAG6 and NCR3LG1. Stimulates NK cells cytotoxicity toward neighboring cells producing these ligands. It controls, for instance, NK cells cytotoxicity against tumor cells. Engagement of NCR3 by BAG6 also promotes myeloid dendritic cells (DC) maturation, both through killing DCs that did not acquire a mature phenotype, and inducing the release by NK cells of TNFA and IFNG that promote DC maturation. The sequence is that of Natural cytotoxicity triggering receptor 3 (NCR3) from Macaca mulatta (Rhesus macaque).